The sequence spans 135 residues: Ribosome-binding factor A (135 aa).

The protein belongs to the RbfA family. As to quaternary structure, monomer. Binds 30S ribosomal subunits, but not 50S ribosomal subunits or 70S ribosomes.

It is found in the cytoplasm. Functionally, one of several proteins that assist in the late maturation steps of the functional core of the 30S ribosomal subunit. Associates with free 30S ribosomal subunits (but not with 30S subunits that are part of 70S ribosomes or polysomes). Required for efficient processing of 16S rRNA. May interact with the 5'-terminal helix region of 16S rRNA. This chain is Ribosome-binding factor A, found in Dinoroseobacter shibae (strain DSM 16493 / NCIMB 14021 / DFL 12).